The chain runs to 477 residues: Membrane-bound lytic murein transglycosylase F (477 aa).

Residues Met-1–Val-22 form the signal peptide. The non-LT domain stretch occupies residues Asp-23 to Val-257. Residues Lys-258 to Lys-477 are LT domain. The active site involves Glu-302. A disordered region spans residues Ser-446–Lys-477. Residues Pro-451–Ala-460 show a composition bias toward acidic residues.

It in the N-terminal section; belongs to the bacterial solute-binding protein 3 family. In the C-terminal section; belongs to the transglycosylase Slt family.

It is found in the cell outer membrane. It carries out the reaction Exolytic cleavage of the (1-&gt;4)-beta-glycosidic linkage between N-acetylmuramic acid (MurNAc) and N-acetylglucosamine (GlcNAc) residues in peptidoglycan, from either the reducing or the non-reducing ends of the peptidoglycan chains, with concomitant formation of a 1,6-anhydrobond in the MurNAc residue.. Its function is as follows. Murein-degrading enzyme that degrades murein glycan strands and insoluble, high-molecular weight murein sacculi, with the concomitant formation of a 1,6-anhydromuramoyl product. Lytic transglycosylases (LTs) play an integral role in the metabolism of the peptidoglycan (PG) sacculus. Their lytic action creates space within the PG sacculus to allow for its expansion as well as for the insertion of various structures such as secretion systems and flagella. The protein is Membrane-bound lytic murein transglycosylase F of Shewanella sp. (strain W3-18-1).